A 526-amino-acid polypeptide reads, in one-letter code: Spermatogenesis-associated protein 7 homolog (526 aa).

A disordered region spans residues 203 to 240; the sequence is DFSDQRMEAETQTELSSFNSELGTAEKKSSKDSDVSIK. Over residues 212–224 the composition is skewed to polar residues; that stretch reads ETQTELSSFNSEL. The span at 226–237 shows a compositional bias: basic and acidic residues; it reads TAEKKSSKDSDV.

As to quaternary structure, found in a complex with CFAP410, NEK1 and SPATA7. Interacts with NEK1. Interacts with RPGRIP1. Interacts with RPGR. Interacts with NPHP4. Interacts with NPHP1. Interacts with AHI1. In early prophase of primary spermatocytes.

It localises to the cytoplasm. Its subcellular location is the cytoskeleton. The protein localises to the cilium axoneme. The protein resides in the cilium basal body. It is found in the cell projection. It localises to the cilium. Its subcellular location is the photoreceptor outer segment. Functionally, involved in the maintenance of both rod and cone photoreceptor cells. Required for photoreceptor-specific localization of proximal connecting cilium (CC) proteins RPGR, AHI1, NPHP1, NPHP4, and RPGRIP1 at the distal CC, a photoreceptor-specific extension of the primary cilium transition zone. Maintenance of protein localization at the photoreceptor-specific distal CC is essential for normal microtubule stability and to prevent photoreceptor degeneration. The chain is Spermatogenesis-associated protein 7 homolog (Spata7) from Rattus norvegicus (Rat).